The chain runs to 145 residues: Cystatin-F (145 aa).

An N-terminal signal peptide occupies residues 1-19 (MRAAGTLLAFCCLVLSTTG). Asparagine 62 carries an N-linked (GlcNAc...) asparagine glycan. Residues 81-85 (QIVKG) carry the Secondary area of contact motif. A disulfide bridge links cysteine 99 with cysteine 110. An N-linked (GlcNAc...) asparagine glycan is attached at asparagine 115. Cysteine 124 and cysteine 144 are disulfide-bonded.

It belongs to the cystatin family. In terms of assembly, homodimer; disulfide-linked. In terms of tissue distribution, primarily expressed in peripheral blood cells and spleen.

The protein resides in the secreted. It is found in the cytoplasm. In terms of biological role, inhibits papain and cathepsin L but with affinities lower than other cystatins. May play a role in immune regulation through inhibition of a unique target in the hematopoietic system. The sequence is that of Cystatin-F (CST7) from Homo sapiens (Human).